The chain runs to 307 residues: Acetyl-coenzyme A carboxylase carboxyl transferase subunit beta (307 aa).

A CoA carboxyltransferase N-terminal domain is found at 25–294; it reads VWTKCTSCEQ…PLVVPIEQPK (270 aa). Zn(2+)-binding residues include Cys29, Cys32, Cys48, and Cys51. The segment at 29 to 51 adopts a C4-type zinc-finger fold; the sequence is CTSCEQVLYHADLERNLEVCPKC.

The protein belongs to the AccD/PCCB family. Acetyl-CoA carboxylase is a heterohexamer composed of biotin carboxyl carrier protein (AccB), biotin carboxylase (AccC) and two subunits each of ACCase subunit alpha (AccA) and ACCase subunit beta (AccD). The cofactor is Zn(2+).

It localises to the cytoplasm. It catalyses the reaction N(6)-carboxybiotinyl-L-lysyl-[protein] + acetyl-CoA = N(6)-biotinyl-L-lysyl-[protein] + malonyl-CoA. It functions in the pathway lipid metabolism; malonyl-CoA biosynthesis; malonyl-CoA from acetyl-CoA: step 1/1. Functionally, component of the acetyl coenzyme A carboxylase (ACC) complex. Biotin carboxylase (BC) catalyzes the carboxylation of biotin on its carrier protein (BCCP) and then the CO(2) group is transferred by the transcarboxylase to acetyl-CoA to form malonyl-CoA. The sequence is that of Acetyl-coenzyme A carboxylase carboxyl transferase subunit beta from Photobacterium profundum (strain SS9).